The sequence spans 410 residues: LL-diaminopimelate aminotransferase (410 aa).

Tyrosine 15 and glycine 42 together coordinate substrate. Residues tyrosine 72, 108–109 (SK), tyrosine 132, asparagine 187, tyrosine 218, and 246–248 (SFS) contribute to the pyridoxal 5'-phosphate site. Substrate-binding residues include lysine 109, tyrosine 132, and asparagine 187. Lysine 249 carries the N6-(pyridoxal phosphate)lysine modification. 2 residues coordinate pyridoxal 5'-phosphate: arginine 257 and asparagine 292. The substrate site is built by asparagine 292 and arginine 388.

This sequence belongs to the class-I pyridoxal-phosphate-dependent aminotransferase family. LL-diaminopimelate aminotransferase subfamily. As to quaternary structure, homodimer. It depends on pyridoxal 5'-phosphate as a cofactor.

The enzyme catalyses (2S,6S)-2,6-diaminopimelate + 2-oxoglutarate = (S)-2,3,4,5-tetrahydrodipicolinate + L-glutamate + H2O + H(+). Its pathway is amino-acid biosynthesis; L-lysine biosynthesis via DAP pathway; LL-2,6-diaminopimelate from (S)-tetrahydrodipicolinate (aminotransferase route): step 1/1. Involved in the synthesis of meso-diaminopimelate (m-DAP or DL-DAP), required for both lysine and peptidoglycan biosynthesis. Catalyzes the direct conversion of tetrahydrodipicolinate to LL-diaminopimelate. This Geobacter sulfurreducens (strain ATCC 51573 / DSM 12127 / PCA) protein is LL-diaminopimelate aminotransferase.